Consider the following 127-residue polypeptide: UPF0325 protein VIBHAR_03240 (127 aa).

Belongs to the UPF0325 family.

This chain is UPF0325 protein VIBHAR_03240, found in Vibrio campbellii (strain ATCC BAA-1116).